Consider the following 325-residue polypeptide: Protein translocase subunit SecF (325 aa).

Transmembrane regions (helical) follow at residues 36 to 56 (GYIL…TKGF), 148 to 168 (LAQG…IYVG), 175 to 197 (LGFG…FSAL), 202 to 224 (DLTF…IVVF), 254 to 274 (TIIT…FGGP), and 281 to 301 (LALL…AIAI).

This sequence belongs to the SecD/SecF family. SecF subfamily. Forms a complex with SecD. Part of the essential Sec protein translocation apparatus which comprises SecA, SecYEG and auxiliary proteins SecDF-YajC and YidC.

It localises to the cell inner membrane. Functionally, part of the Sec protein translocase complex. Interacts with the SecYEG preprotein conducting channel. SecDF uses the proton motive force (PMF) to complete protein translocation after the ATP-dependent function of SecA. This is Protein translocase subunit SecF from Haemophilus influenzae (strain ATCC 51907 / DSM 11121 / KW20 / Rd).